Consider the following 365-residue polypeptide: tRNA 2-selenouridine synthase (365 aa).

Positions 12-136 constitute a Rhodanese domain; the sequence is FLHDVPLLDV…LRMFLIDTTQ (125 aa). The active-site S-selanylcysteine intermediate is the Cys-95.

It belongs to the SelU family. Monomer.

It catalyses the reaction 5-methylaminomethyl-2-thiouridine(34) in tRNA + selenophosphate + (2E)-geranyl diphosphate + H2O + H(+) = 5-methylaminomethyl-2-selenouridine(34) in tRNA + (2E)-thiogeraniol + phosphate + diphosphate. The catalysed reaction is 5-methylaminomethyl-2-thiouridine(34) in tRNA + (2E)-geranyl diphosphate = 5-methylaminomethyl-S-(2E)-geranyl-thiouridine(34) in tRNA + diphosphate. It carries out the reaction 5-methylaminomethyl-S-(2E)-geranyl-thiouridine(34) in tRNA + selenophosphate + H(+) = 5-methylaminomethyl-2-(Se-phospho)selenouridine(34) in tRNA + (2E)-thiogeraniol. The enzyme catalyses 5-methylaminomethyl-2-(Se-phospho)selenouridine(34) in tRNA + H2O = 5-methylaminomethyl-2-selenouridine(34) in tRNA + phosphate. Involved in the post-transcriptional modification of the uridine at the wobble position (U34) of tRNA(Lys), tRNA(Glu) and tRNA(Gln). Catalyzes the conversion of 2-thiouridine (S2U-RNA) to 2-selenouridine (Se2U-RNA). Acts in a two-step process involving geranylation of 2-thiouridine (S2U) to S-geranyl-2-thiouridine (geS2U) and subsequent selenation of the latter derivative to 2-selenouridine (Se2U) in the tRNA chain. This is tRNA 2-selenouridine synthase from Verminephrobacter eiseniae (strain EF01-2).